A 280-amino-acid polypeptide reads, in one-letter code: 4-deoxy-L-threo-5-hexosulose-uronate ketol-isomerase (280 aa).

Residues histidine 198, histidine 200, glutamate 205, and histidine 247 each contribute to the Zn(2+) site.

It belongs to the KduI family. Zn(2+) serves as cofactor.

The catalysed reaction is 5-dehydro-4-deoxy-D-glucuronate = 3-deoxy-D-glycero-2,5-hexodiulosonate. The protein operates within glycan metabolism; pectin degradation; 2-dehydro-3-deoxy-D-gluconate from pectin: step 4/5. In terms of biological role, catalyzes the isomerization of 5-dehydro-4-deoxy-D-glucuronate to 3-deoxy-D-glycero-2,5-hexodiulosonate. This chain is 4-deoxy-L-threo-5-hexosulose-uronate ketol-isomerase, found in Lachnospira eligens (strain ATCC 27750 / DSM 3376 / VPI C15-48 / C15-B4) (Eubacterium eligens).